Reading from the N-terminus, the 546-residue chain is T-complex protein 1 subunit epsilon (546 aa).

Belongs to the TCP-1 chaperonin family. Heterooligomeric complex of about 850 to 900 kDa that forms two stacked rings, 12 to 16 nm in diameter.

The protein localises to the cytoplasm. Functionally, molecular chaperone; assists the folding of proteins upon ATP hydrolysis. Known to play a role, in vitro, in the folding of actin and tubulin. The sequence is that of T-complex protein 1 subunit epsilon (cct5) from Schizosaccharomyces pombe (strain 972 / ATCC 24843) (Fission yeast).